Reading from the N-terminus, the 583-residue chain is Protein NRT1/ PTR FAMILY 5.1 (583 aa).

The chain crosses the membrane as a helical span at residues 74–94; it reads WSGAVWITPIAGAYIADSYIG. Threonine 98 is modified (phosphothreonine). Helical transmembrane passes span 99 to 119, 134 to 154, 182 to 202, 210 to 230, 320 to 340, 361 to 381, 405 to 425, 446 to 466, 485 to 505, and 529 to 549; these read FTAS…AVTV, ASSL…IGAG, FFNW…LGLV, WGLG…VFYI, VLGL…WAQV, IPAA…VPMY, LGVG…VEVK, IFWL…NAIG, TFFT…VTMI, and YYYG…VWAA.

It belongs to the major facilitator superfamily. Proton-dependent oligopeptide transporter (POT/PTR) (TC 2.A.17) family. Expressed in flowers. Detected in stems, leaves and siliques.

It localises to the membrane. The polypeptide is Protein NRT1/ PTR FAMILY 5.1 (NPF5.1) (Arabidopsis thaliana (Mouse-ear cress)).